The following is a 309-amino-acid chain: Protease HtpX homolog (309 aa).

2 consecutive transmembrane segments (helical) span residues 7-27 and 28-48; these read AILL…IGGA and SGAM…YWNS. A Zn(2+)-binding site is contributed by H130. The active site involves E131. Residue H134 coordinates Zn(2+). Transmembrane regions (helical) follow at residues 145 to 165 and 173 to 193; these read VTAT…FFGG and GLGV…AMLV. Zn(2+) is bound at residue E202.

Belongs to the peptidase M48B family. It depends on Zn(2+) as a cofactor.

It is found in the cell inner membrane. The polypeptide is Protease HtpX homolog (Rhodopseudomonas palustris (strain BisA53)).